The sequence spans 123 residues: Large ribosomal subunit protein bL19 (123 aa).

Belongs to the bacterial ribosomal protein bL19 family.

Its function is as follows. This protein is located at the 30S-50S ribosomal subunit interface and may play a role in the structure and function of the aminoacyl-tRNA binding site. This chain is Large ribosomal subunit protein bL19, found in Acinetobacter baylyi (strain ATCC 33305 / BD413 / ADP1).